Consider the following 294-residue polypeptide: tRNA dimethylallyltransferase (294 aa).

10 to 17 contacts ATP; that stretch reads GITASGKS. Position 12-17 (12-17) interacts with substrate; the sequence is TASGKS. An interaction with substrate tRNA region spans residues 36–39; it reads DSKQ.

Belongs to the IPP transferase family. Monomer. Mg(2+) is required as a cofactor.

It catalyses the reaction adenosine(37) in tRNA + dimethylallyl diphosphate = N(6)-dimethylallyladenosine(37) in tRNA + diphosphate. Its function is as follows. Catalyzes the transfer of a dimethylallyl group onto the adenine at position 37 in tRNAs that read codons beginning with uridine, leading to the formation of N6-(dimethylallyl)adenosine (i(6)A). The sequence is that of tRNA dimethylallyltransferase from Wolbachia sp. subsp. Drosophila simulans (strain wRi).